Here is a 390-residue protein sequence, read N- to C-terminus: Protein phosphatase 1B (390 aa).

Basic and acidic residues predominate over residues methionine 1–asparagine 14. Positions methionine 1 to asparagine 20 are disordered. Glycine 2 is lipidated: N-myristoyl glycine. Residue lysine 12 forms a Glycyl lysine isopeptide (Lys-Gly) (interchain with G-Cter in ISG15) linkage. One can recognise a PPM-type phosphatase domain in the interval arginine 23–phenylalanine 295. Mn(2+) is bound by residues aspartate 60, glycine 61, aspartate 243, and aspartate 286. The segment at asparagine 371–leucine 390 is disordered. Phosphoserine is present on serine 386.

Belongs to the PP2C family. In terms of assembly, monomer. Interacts with PAK6. Interacts with the phosphorylated form of IKBKB/IKKB. Mg(2+) is required as a cofactor. Mn(2+) serves as cofactor. Isgylation negatively regulates its activity. Post-translationally, N-myristoylation is essential for the recognition of its substrates for dephosphorylation.

Its subcellular location is the cytoplasm. It localises to the cytosol. The protein resides in the membrane. The enzyme catalyses O-phospho-L-seryl-[protein] + H2O = L-seryl-[protein] + phosphate. It carries out the reaction O-phospho-L-threonyl-[protein] + H2O = L-threonyl-[protein] + phosphate. Functionally, enzyme with a broad specificity. Dephosphorylates PRKAA1 and PRKAA2. Inhibits TBK1-mediated antiviral signaling by dephosphorylating it at 'Ser-172'. Plays an important role in the termination of TNF-alpha-mediated NF-kappa-B activation through dephosphorylating and inactivating IKBKB/IKKB. The sequence is that of Protein phosphatase 1B (Ppm1b) from Rattus norvegicus (Rat).